The following is a 326-amino-acid chain: Balbiani ring protein 1 (326 aa).

The segment covering Pro-1 to Gly-33 has biased composition (low complexity). The segment at Pro-1–Met-119 is disordered. Residues Pro-34 to Cys-51 show a composition bias toward basic and acidic residues. Residues Val-93–Thr-102 show a composition bias toward low complexity. The span at Ser-107 to Met-119 shows a compositional bias: basic and acidic residues.

As to expression, salivary gland.

It is found in the secreted. Its function is as follows. Used by the larvae to construct a supramolecular structure, the larval tube. The protein is Balbiani ring protein 1 (BR1) of Chironomus pallidivittatus (Midge).